The following is a 118-amino-acid chain: Large ribosomal subunit protein bL20 (118 aa).

This sequence belongs to the bacterial ribosomal protein bL20 family.

Its function is as follows. Binds directly to 23S ribosomal RNA and is necessary for the in vitro assembly process of the 50S ribosomal subunit. It is not involved in the protein synthesizing functions of that subunit. This chain is Large ribosomal subunit protein bL20, found in Agathobacter rectalis (strain ATCC 33656 / DSM 3377 / JCM 17463 / KCTC 5835 / VPI 0990) (Eubacterium rectale).